The chain runs to 891 residues: 26S proteasome non-ATPase regulatory subunit 2 homolog B (891 aa).

The disordered stretch occupies residues 1–43; sequence MAPVPDPNSVGGGAKRDEATTKIPSKDSKKKDDKKEEDLSEED. Basic and acidic residues predominate over residues 14–37; it reads AKRDEATTKIPSKDSKKKDDKKEE. PC repeat units lie at residues 414–447, 448–484, 485–519, 522–556, 565–594, 674–705, and 724–739; these read SAVA…PVVA, GALL…SVRI, GAIM…PLDV, FAAL…AELG, LGLG…KIRK, LALG…EVAM, and AGML…KDAS.

It belongs to the proteasome subunit S2 family. Component of the 19S regulatory particle (RP/PA700) base subcomplex of the 26S proteasome. The 26S proteasome is composed of a core protease (CP), known as the 20S proteasome, capped at one or both ends by the 19S regulatory particle (RP/PA700). The RP/PA700 complex is composed of at least 17 different subunits in two subcomplexes, the base and the lid, which form the portions proximal and distal to the 20S proteolytic core, respectively. Ubiquitinated. In terms of tissue distribution, expressed in stems, leaves, buds, flowers, siliques and developing seeds.

In terms of biological role, acts as a regulatory subunit of the 26 proteasome which is involved in the ATP-dependent degradation of ubiquitinated proteins. In Arabidopsis thaliana (Mouse-ear cress), this protein is 26S proteasome non-ATPase regulatory subunit 2 homolog B (RPN1B).